The sequence spans 177 residues: Ubiquinol-cytochrome c reductase iron-sulfur subunit (177 aa).

Residues 18–38 form a helical membrane-spanning segment; the sequence is IVLTASSVAAVGAACAFWPII. In terms of domain architecture, Rieske spans 88–175; sequence ARAVKMSELI…YIFISDKKIR (88 aa). Residues Cys120, His122, Cys139, and His142 each coordinate [2Fe-2S] cluster. Cys125 and Cys141 are oxidised to a cystine.

The protein belongs to the Rieske iron-sulfur protein family. In terms of assembly, the main subunits of complex b-c1 are: cytochrome b, cytochrome c1 and the Rieske protein. It depends on [2Fe-2S] cluster as a cofactor.

Its subcellular location is the cell membrane. It catalyses the reaction a quinol + 2 Fe(III)-[cytochrome c](out) = a quinone + 2 Fe(II)-[cytochrome c](out) + 2 H(+)(out). Its function is as follows. Component of the ubiquinol-cytochrome c reductase complex (complex III or cytochrome b-c1 complex), which is a respiratory chain that generates an electrochemical potential coupled to ATP synthesis. This Rickettsia prowazekii (strain Madrid E) protein is Ubiquinol-cytochrome c reductase iron-sulfur subunit (petA).